The following is a 418-amino-acid chain: Gamma-glutamyl phosphate reductase (418 aa).

Belongs to the gamma-glutamyl phosphate reductase family.

The protein resides in the cytoplasm. It catalyses the reaction L-glutamate 5-semialdehyde + phosphate + NADP(+) = L-glutamyl 5-phosphate + NADPH + H(+). Its pathway is amino-acid biosynthesis; L-proline biosynthesis; L-glutamate 5-semialdehyde from L-glutamate: step 2/2. In terms of biological role, catalyzes the NADPH-dependent reduction of L-glutamate 5-phosphate into L-glutamate 5-semialdehyde and phosphate. The product spontaneously undergoes cyclization to form 1-pyrroline-5-carboxylate. This Geobacter sp. (strain M21) protein is Gamma-glutamyl phosphate reductase.